Here is a 203-residue protein sequence, read N- to C-terminus: Small ribosomal subunit protein uS4 (203 aa).

The region spanning 93-154 (RRFDNVVFRA…KSKNMDAVTE (62 aa)) is the S4 RNA-binding domain.

Belongs to the universal ribosomal protein uS4 family. Part of the 30S ribosomal subunit. Contacts protein S5. The interaction surface between S4 and S5 is involved in control of translational fidelity.

Functionally, one of the primary rRNA binding proteins, it binds directly to 16S rRNA where it nucleates assembly of the body of the 30S subunit. Its function is as follows. With S5 and S12 plays an important role in translational accuracy. This chain is Small ribosomal subunit protein uS4, found in Prosthecochloris aestuarii (strain DSM 271 / SK 413).